Consider the following 106-residue polypeptide: MADWNGEYISPYAEHGKKSEQVKKITVSIPLKVLKVLTDERTRRQINNLRHATNSELLCEAFLHAYTGQPLPTDEDLRKDRPDDIPTEVKKLMTEMGIEFEAFDEE.

This sequence belongs to the MetJ family. Homodimer.

It is found in the cytoplasm. Functionally, this regulatory protein, when combined with SAM (S-adenosylmethionine) represses the expression of the methionine regulon and of enzymes involved in SAM synthesis. The sequence is that of Met repressor from Vibrio atlanticus (strain LGP32) (Vibrio splendidus (strain Mel32)).